We begin with the raw amino-acid sequence, 117 residues long: MSGKRISREKLTIKKMIDLYQAKCPQASAEPEHYEALFVYAQKRLDKCVFGEEKPACKQCPVHCYQPAKREEMKQIMRWAGPRMLWRHPILTVRHLIDDKRPVPELPEKYRPKKPHE.

This is an uncharacterized protein from Escherichia coli (strain K12).